The sequence spans 210 residues: Dephospho-CoA kinase (210 aa).

The DPCK domain occupies 4 to 202; the sequence is WVGLTGGIGS…AFYSGIFASK (199 aa). ATP is bound at residue 12 to 17; it reads GSGKSA.

The protein belongs to the CoaE family.

It localises to the cytoplasm. It catalyses the reaction 3'-dephospho-CoA + ATP = ADP + CoA + H(+). Its pathway is cofactor biosynthesis; coenzyme A biosynthesis; CoA from (R)-pantothenate: step 5/5. Its function is as follows. Catalyzes the phosphorylation of the 3'-hydroxyl group of dephosphocoenzyme A to form coenzyme A. The protein is Dephospho-CoA kinase of Neisseria gonorrhoeae (strain ATCC 700825 / FA 1090).